The chain runs to 1547 residues: Transposon Ty3-G Gag-Pol polyprotein (1547 aa).

An N-acetylserine modification is found at serine 2. The CCHC-type zinc finger occupies 265–282 (RLCFYCKKEGHRLNECRA). Aspartate 336 (for protease activity; shared with dimeric partner) is an active-site residue. The 178-residue stretch at 620–797 (LDNKFIVPSK…EETEFLGYSI (178 aa)) folds into the Reverse transcriptase domain. Mg(2+) contacts are provided by aspartate 686, aspartate 748, aspartate 749, aspartate 893, glutamate 936, and aspartate 961. Residues 893–1011 (DASKDGIGAV…VADAISRAVY (119 aa)) form the RNase H Ty3/gyspy-type domain. Residues 1106–1145 (HTLFGGHFGVTVTLAKISPIYYWPKLQHSIIQYIRTCVQC) are integrase-type zinc finger-like. Residues 1159-1324 (LQPLPIAEGR…SPFEIDLGYL (166 aa)) enclose the Integrase catalytic domain. Mg(2+)-binding residues include aspartate 1175 and aspartate 1236.

As to quaternary structure, the protease is a homodimer, whose active site consists of two apposed aspartic acid residues. Post-translationally, initially, virus-like particles (VLPs) are composed of the structural unprocessed proteins Gag and Gag-Pol, and also contain the host initiator methionine tRNA (tRNA(i)-Met) which serves as a primer for minus-strand DNA synthesis, and a dimer of genomic Ty RNA. Processing of the polyproteins occurs within the particle and proceeds by an ordered pathway, called maturation. First, the protease (PR) is released by autocatalytic cleavage of the Gag-Pol polyprotein, and this cleavage is a prerequisite for subsequent processing at the remaining sites to release the mature structural and catalytic proteins. Maturation takes place prior to the RT reaction and is required to produce transposition-competent VLPs.

It localises to the cytoplasm. The protein resides in the nucleus. It catalyses the reaction DNA(n) + a 2'-deoxyribonucleoside 5'-triphosphate = DNA(n+1) + diphosphate. The enzyme catalyses Endonucleolytic cleavage to 5'-phosphomonoester.. Its function is as follows. Capsid protein (CA) is the structural component of the virus-like particle (VLP), forming the shell that encapsulates the genomic RNA-nucleocapsid complex. In terms of biological role, nucleocapsid protein p11 (NC) forms the nucleocore that coats the retro-elements dimeric RNA. Binds these RNAs through its zinc fingers. Promotes primer tRNA(i)-Met annealing to the multipartite primer-binding site (PBS), dimerization of Ty3 RNA and initiation of reverse transcription. The aspartyl protease (PR) mediates the proteolytic cleavages of the Gag and Gag-Pol polyproteins after assembly of the VLP. Functionally, reverse transcriptase/ribonuclease H (RT) is a multifunctional enzyme that catalyzes the conversion of the retro-elements RNA genome into dsDNA within the VLP. The enzyme displays a DNA polymerase activity that can copy either DNA or RNA templates, and a ribonuclease H (RNase H) activity that cleaves the RNA strand of RNA-DNA heteroduplexes during plus-strand synthesis and hydrolyzes RNA primers. The conversion leads to a linear dsDNA copy of the retrotransposon that includes long terminal repeats (LTRs) at both ends. Its function is as follows. Integrase (IN) targets the VLP to the nucleus, where a subparticle preintegration complex (PIC) containing at least integrase and the newly synthesized dsDNA copy of the retrotransposon must transit the nuclear membrane. Once in the nucleus, integrase performs the integration of the dsDNA into the host genome. This Saccharomyces cerevisiae (strain ATCC 204508 / S288c) (Baker's yeast) protein is Transposon Ty3-G Gag-Pol polyprotein (TY3B-G).